A 453-amino-acid polypeptide reads, in one-letter code: Ribulose bisphosphate carboxylase large chain (453 aa).

Positions 1–2 (MS) are excised as a propeptide. At Pro3 the chain carries N-acetylproline. N6,N6,N6-trimethyllysine is present on Lys14. Substrate-binding residues include Asn123 and Thr173. Lys175 (proton acceptor) is an active-site residue. Residue Lys177 coordinates substrate. The Mg(2+) site is built by Lys201, Asp203, and Glu204. Position 201 is an N6-carboxylysine (Lys201). His294 functions as the Proton acceptor in the catalytic mechanism. Residues Arg295, His327, and Ser379 each contribute to the substrate site.

It belongs to the RuBisCO large chain family. Type I subfamily. Heterohexadecamer of 8 large chains and 8 small chains; disulfide-linked. The disulfide link is formed within the large subunit homodimers. Mg(2+) serves as cofactor. Post-translationally, the disulfide bond which can form in the large chain dimeric partners within the hexadecamer appears to be associated with oxidative stress and protein turnover.

It localises to the plastid. Its subcellular location is the chloroplast. It carries out the reaction 2 (2R)-3-phosphoglycerate + 2 H(+) = D-ribulose 1,5-bisphosphate + CO2 + H2O. The catalysed reaction is D-ribulose 1,5-bisphosphate + O2 = 2-phosphoglycolate + (2R)-3-phosphoglycerate + 2 H(+). Functionally, ruBisCO catalyzes two reactions: the carboxylation of D-ribulose 1,5-bisphosphate, the primary event in carbon dioxide fixation, as well as the oxidative fragmentation of the pentose substrate in the photorespiration process. Both reactions occur simultaneously and in competition at the same active site. This chain is Ribulose bisphosphate carboxylase large chain, found in Galium lucidum.